The chain runs to 294 residues: Shikimate dehydrogenase (NADP(+)) (294 aa).

Shikimate is bound by residues 23-25 (SRS) and Thr-76. The active-site Proton acceptor is the Lys-80. Shikimate is bound by residues Asn-101 and Asp-116. Residues 141 to 145 (GAGGA) and Met-233 contribute to the NADP(+) site. Residue Tyr-235 participates in shikimate binding. Gly-256 lines the NADP(+) pocket.

It belongs to the shikimate dehydrogenase family. As to quaternary structure, homodimer.

It catalyses the reaction shikimate + NADP(+) = 3-dehydroshikimate + NADPH + H(+). It functions in the pathway metabolic intermediate biosynthesis; chorismate biosynthesis; chorismate from D-erythrose 4-phosphate and phosphoenolpyruvate: step 4/7. In terms of biological role, involved in the biosynthesis of the chorismate, which leads to the biosynthesis of aromatic amino acids. Catalyzes the reversible NADPH linked reduction of 3-dehydroshikimate (DHSA) to yield shikimate (SA). This Methylibium petroleiphilum (strain ATCC BAA-1232 / LMG 22953 / PM1) protein is Shikimate dehydrogenase (NADP(+)).